The sequence spans 522 residues: uncharacterized protein (522 aa).

A compositionally biased stretch (low complexity) spans 1–11 (MSSITSRVSSR). Residues 1–20 (MSSITSRVSSRSSHELTEKK) are disordered. 12 helical membrane-spanning segments follow: residues 69–89 (VLWK…MIQY), 116–136 (SMTT…AILM), 141–161 (LSYF…LMAA), 173–193 (FLAG…TAMW), 204–224 (LCWY…SYGL), 236–256 (YVFI…VFIP), 303–323 (VIMI…GVFS), 338–358 (AVLN…SGVL), 367–387 (LLIG…IWKI), 396–416 (LVGV…LSLI), 428–448 (VTSA…PQLF), and 462–482 (AMIV…GYYI).

The protein belongs to the major facilitator superfamily. Allantoate permease family.

The protein resides in the endoplasmic reticulum. The protein localises to the membrane. This is an uncharacterized protein from Schizosaccharomyces pombe (strain 972 / ATCC 24843) (Fission yeast).